The sequence spans 460 residues: Cysteine--tRNA ligase (460 aa).

Residue Cys-28 participates in Zn(2+) binding. A 'HIGH' region motif is present at residues 30 to 40; it reads VTIYDLCHIGH. Residues Cys-209, His-234, and Glu-238 each coordinate Zn(2+). The 'KMSKS' region motif lies at 266 to 270; that stretch reads KMSKS. Position 269 (Lys-269) interacts with ATP.

The protein belongs to the class-I aminoacyl-tRNA synthetase family. As to quaternary structure, monomer. Zn(2+) serves as cofactor.

It is found in the cytoplasm. It carries out the reaction tRNA(Cys) + L-cysteine + ATP = L-cysteinyl-tRNA(Cys) + AMP + diphosphate. This chain is Cysteine--tRNA ligase, found in Vibrio parahaemolyticus serotype O3:K6 (strain RIMD 2210633).